The chain runs to 156 residues: Small ribosomal subunit protein uS7 (156 aa).

It belongs to the universal ribosomal protein uS7 family. Part of the 30S ribosomal subunit. Contacts proteins S9 and S11.

Functionally, one of the primary rRNA binding proteins, it binds directly to 16S rRNA where it nucleates assembly of the head domain of the 30S subunit. Is located at the subunit interface close to the decoding center, probably blocks exit of the E-site tRNA. The chain is Small ribosomal subunit protein uS7 from Allorhizobium ampelinum (strain ATCC BAA-846 / DSM 112012 / S4) (Agrobacterium vitis (strain S4)).